We begin with the raw amino-acid sequence, 462 residues long: Glycine--tRNA ligase (462 aa).

Positions 101 and 164 each coordinate substrate. ATP is bound by residues 196–198 (RNE), 206–211 (FRTREF), 283–284 (EL), and 327–330 (GVDR). 211-215 (FEQME) provides a ligand contact to substrate. Residue 323–327 (EPSAG) participates in substrate binding.

The protein belongs to the class-II aminoacyl-tRNA synthetase family. As to quaternary structure, homodimer.

The protein resides in the cytoplasm. The enzyme catalyses tRNA(Gly) + glycine + ATP = glycyl-tRNA(Gly) + AMP + diphosphate. Catalyzes the attachment of glycine to tRNA(Gly). In Thermobifida fusca (strain YX), this protein is Glycine--tRNA ligase.